The primary structure comprises 201 residues: Large ribosomal subunit protein bL25 (201 aa).

It belongs to the bacterial ribosomal protein bL25 family. CTC subfamily. Part of the 50S ribosomal subunit; part of the 5S rRNA/L5/L18/L25 subcomplex. Contacts the 5S rRNA. Binds to the 5S rRNA independently of L5 and L18.

In terms of biological role, this is one of the proteins that binds to the 5S RNA in the ribosome where it forms part of the central protuberance. The protein is Large ribosomal subunit protein bL25 of Akkermansia muciniphila (strain ATCC BAA-835 / DSM 22959 / JCM 33894 / BCRC 81048 / CCUG 64013 / CIP 107961 / Muc).